A 244-amino-acid chain; its full sequence is Venom nerve growth factor 1 (244 aa).

The first 18 residues, 1-18 (MSMLCYTLIIAFLIGIWA), serve as a signal peptide directing secretion. Residues 19-125 (APKSEDNVPL…TLNRNIRAKR (107 aa)) constitute a propeptide that is removed on maturation. Residues 47 to 66 (GLKTSRNTDQRHPAPKKAED) are compositionally biased toward basic and acidic residues. The interval 47-67 (GLKTSRNTDQRHPAPKKAEDQ) is disordered. Cystine bridges form between C139/C205, C181/C233, and C193/C235.

The protein belongs to the NGF-beta family. Homodimer; non-covalently linked. As to expression, expressed by the venom gland.

It localises to the secreted. In terms of biological role, nerve growth factor is important for the development and maintenance of the sympathetic and sensory nervous systems. It stimulates division and differentiation of sympathetic and embryonic sensory neurons as well as basal forebrain cholinergic neurons in the brain. Its relevance in the snake venom is not clear. However, it has been shown to inhibit metalloproteinase-dependent proteolysis of platelet glycoprotein Ib alpha, suggesting a metalloproteinase inhibition to prevent metalloprotease autodigestion and/or protection against prey proteases. Binds a lipid between the two protein chains in the homodimer. The lipid-bound form promotes histamine relase from mouse mast cells, contrary to the lipid-free form. The protein is Venom nerve growth factor 1 of Notechis scutatus scutatus (Mainland tiger snake).